Consider the following 290-residue polypeptide: 4-hydroxybenzoate octaprenyltransferase (290 aa).

The next 8 membrane-spanning stretches (helical) occupy residues 23–43, 46–66, 99–119, 141–161, 170–190, 213–233, 234–254, and 268–288; these read IGTL…GKGV, LSIL…GCVV, LFVV…AMTI, LPQF…YAAV, WLLL…YAMV, LIVG…GYLT, QMSG…IHQQ, and AFMD…LSYW.

It belongs to the UbiA prenyltransferase family. Mg(2+) is required as a cofactor.

It localises to the cell inner membrane. The catalysed reaction is all-trans-octaprenyl diphosphate + 4-hydroxybenzoate = 4-hydroxy-3-(all-trans-octaprenyl)benzoate + diphosphate. It participates in cofactor biosynthesis; ubiquinone biosynthesis. Functionally, catalyzes the prenylation of para-hydroxybenzoate (PHB) with an all-trans polyprenyl group. Mediates the second step in the final reaction sequence of ubiquinone-8 (UQ-8) biosynthesis, which is the condensation of the polyisoprenoid side chain with PHB, generating the first membrane-bound Q intermediate 3-octaprenyl-4-hydroxybenzoate. The sequence is that of 4-hydroxybenzoate octaprenyltransferase from Serratia proteamaculans (strain 568).